The primary structure comprises 300 residues: Acetylglutamate kinase (300 aa).

Substrate contacts are provided by residues 68-69 (GG), Arg90, and Asn194.

This sequence belongs to the acetylglutamate kinase family. ArgB subfamily.

It is found in the cytoplasm. The catalysed reaction is N-acetyl-L-glutamate + ATP = N-acetyl-L-glutamyl 5-phosphate + ADP. It functions in the pathway amino-acid biosynthesis; L-arginine biosynthesis; N(2)-acetyl-L-ornithine from L-glutamate: step 2/4. Catalyzes the ATP-dependent phosphorylation of N-acetyl-L-glutamate. The sequence is that of Acetylglutamate kinase from Methanocella arvoryzae (strain DSM 22066 / NBRC 105507 / MRE50).